The sequence spans 500 residues: Protein farnesyltransferase subunit beta (500 aa).

The tract at residues 117–140 is disordered; it reads LQNDDNNGNNNNRENNQNGGGFGG. Low complexity predominate over residues 119–133; it reads NDDNNGNNNNRENNQ. PFTB repeat units follow at residues 121–162, 172–213, 220–261, 268–309, and 343–384; these read DNNG…YVIG, REAM…SMLN, ERGV…SILN, MNSL…IIIQ, and QEYV…SLSQ. Residues 246–249 and 288–291 contribute to the (2E,6E)-farnesyl diphosphate site; these read HGGY and RTNK. Zn(2+) contacts are provided by aspartate 294 and cysteine 296. 297-300 is a (2E,6E)-farnesyl diphosphate binding site; the sequence is YSYW. Residue histidine 372 coordinates Zn(2+). The segment at 402-451 is disordered; it reads FEQPSPPINKKSTNVFTISNNNNNNNNKNNNSDDNNNNSNNNNNNSENQL. The span at 420–449 shows a compositional bias: low complexity; sequence SNNNNNNNNKNNNSDDNNNNSNNNNNNSEN.

This sequence belongs to the protein prenyltransferase subunit beta family. In terms of assembly, heterodimer of fntA and fntB (farnesyltransferase). Heterodimer of an alpha and a beta subunit. The cofactor is Zn(2+).

It catalyses the reaction L-cysteinyl-[protein] + (2E,6E)-farnesyl diphosphate = S-(2E,6E)-farnesyl-L-cysteinyl-[protein] + diphosphate. Catalyzes the transfer of a farnesyl moiety from farnesyl diphosphate to a cysteine at the fourth position from the C-terminus of several proteins. The beta subunit is responsible for peptide-binding. In Dictyostelium discoideum (Social amoeba), this protein is Protein farnesyltransferase subunit beta (fntB).